We begin with the raw amino-acid sequence, 437 residues long: GTPase Era, mitochondrial (437 aa).

The N-terminal 20 residues, 1 to 20 (MAAPRRYFPGIVRALLGAWQ), are a transit peptide targeting the mitochondrion. The region spanning 112 to 330 (RVLRVVLLGA…QYLLTQAQPG (219 aa)) is the Era-type G domain. The G1 stretch occupies residues 120-127 (GAPNAGKS). Position 120 to 127 (120 to 127 (GAPNAGKS)) interacts with GTP. Residues 146-150 (HTTRC) are G2. The segment at 167-170 (DTPG) is G3. 167–171 (DTPGI) lines the GTP pocket. Ser173 carries the phosphoserine modification. 236-239 (NKVD) lines the GTP pocket. A G4 region spans residues 236 to 239 (NKVD). The tract at residues 272–293 (SRPSTHCPGPETEDPNTHAVRS) is disordered. A G5 region spans residues 308–310 (LSA). In terms of domain architecture, KH type-2 spans 360–437 (LPEEVPYSVQ…LLRLSVKLLK (78 aa)).

Belongs to the TRAFAC class TrmE-Era-EngA-EngB-Septin-like GTPase superfamily. Era GTPase family.

Its subcellular location is the mitochondrion matrix. The protein resides in the mitochondrion inner membrane. Probable GTPase that plays a role in the mitochondrial ribosomal small subunit assembly. Specifically binds the 12S mitochondrial rRNA (12S mt-rRNA) to a 33 nucleotide section delineating the 3' terminal stem-loop region. May act as a chaperone that protects the 12S mt-rRNA on the 28S mitoribosomal subunit during ribosomal small subunit assembly. In Rattus norvegicus (Rat), this protein is GTPase Era, mitochondrial (Eral1).